We begin with the raw amino-acid sequence, 664 residues long: MTEKSNGVKSSPANNHNNHVPATIKANGKDESRTRSRPQSAADDDTSSELQRLAEMDAPQQRRGGFRRIVRLVGVIRQWANRNFREEEARPDSFLERFRGPELQTVTTQQGDGKGDKDGDGKGTKKKFELFVLDPAGDWYYRWLFVIAMPVLYNWCLLVARACFSDLQRGYFLVWLVLDYFSDVVYIADLFIRLRTGFLEQGLLVKDPKKLRDNYIHTLQFKLDVASIIPTDLIYFAVGIHNPELRFNRLLHFARMFEFFDRTETRTSYPNIFRISNLVLYILVIIHWNACIYYAISKSIGFGVDTWVYPNITDPEYGYLAREYIYCLYWSTLTLTTIGETPPPVKDEEYLFVIFDFLIGVLIFATIVGNVGSMISNMNATRAEFQAKIDAVKHYMQFRKVSKEMEAKVIKWFDYLWTNKKTVDEREVLKNLPAKLRAEIAINVHLSTLKKVRIFQDCEAGLLVELVLKLRPQVFSPGDYICRKGDIGKEMYIIKEGKLAVVADDGVTQYALLSAGSCFGEISILNIKGSKMGNRRTANIRSLGYSDLFCLSKDDLMEAVTEYPDAKKVLEERGREILMKEGLLDENEVAASMEVDVQEKLKQLETNMETLYTRFGRLLAEYTGAQQKLKQRITVLEVKMKQNTEDDYLSDGMNSPEPAAAEQP.

A compositionally biased stretch (polar residues) spans Met1–Val20. Residues Met1–Glu49 form a disordered region. The Cytoplasmic segment spans residues Met1 to Leu144. Residues Phe145 to Asp166 traverse the membrane as a helical segment. The Extracellular portion of the chain corresponds to Leu167–Leu176. The helical transmembrane segment at Val177–Gly197 threads the bilayer. At Phe198–Lys222 the chain is on the cytoplasmic side. The helical transmembrane segment at Leu223–His241 threads the bilayer. Residues Asn242–Arg246 lie on the Extracellular side of the membrane. The chain crosses the membrane as a helical span at residues Phe247 to Thr265. The Cytoplasmic segment spans residues Arg266–Ile272. Residues Pro270–Met378 are ion conduction pathway. Residues Phe273 to Ile296 traverse the membrane as a helical segment. The Extracellular segment spans residues Ser297–Tyr319. A run of 2 helical transmembrane segments spans residues Leu320–Ile354 and Phe355–Asn379. The segment at Thr337–Glu340 is selectivity filter. Residues Ala380–Gln456 form a C-linker region. At Ala380–Pro664 the chain is on the cytoplasmic side. The interval Ala460–Lys580 is cyclic nucleotide-binding domain. Gly520, Ser523, Arg536, and Thr537 together coordinate 3',5'-cyclic GMP. 3',5'-cyclic AMP-binding residues include Arg536 and Thr537. A coiled-coil region spans residues Val597 to Asp651. Positions Thr644–Pro664 are disordered.

This sequence belongs to the cyclic nucleotide-gated cation channel (TC 1.A.1.5) family. CNGA2 subfamily. In terms of assembly, the olfactory cyclic nucleotide-gated channel is an heterotetramer composed of CNGA2, CNGA4 and CNGB1b subunits with 2:1:1 stoichiometry.

The protein localises to the cell projection. Its subcellular location is the cilium membrane. The enzyme catalyses Ca(2+)(in) = Ca(2+)(out). It catalyses the reaction Na(+)(in) = Na(+)(out). The catalysed reaction is K(+)(in) = K(+)(out). It carries out the reaction NH4(+)(in) = NH4(+)(out). The enzyme catalyses Rb(+)(in) = Rb(+)(out). It catalyses the reaction Li(+)(in) = Li(+)(out). The catalysed reaction is Cs(+)(in) = Cs(+)(out). Pore-forming subunit of the olfactory cyclic nucleotide-gated channel. Operates in the cilia of olfactory sensory neurons where chemical stimulation of the odorant is converted to an electrical signal. Mediates odorant-induced cAMP-dependent Ca(2+) influx triggering neuron depolarization. The rise of intracellular Ca(2+) levels potentiates the olfactory response by activating Ca(2+)-dependent Cl(-) channels, but it also serves as a negative feedback signal to desensitize the channel for rapid adaptation to odorants. Conducts cAMP- and cGMP-gated ion currents, with permeability for monovalent and divalent cations. This Oryctolagus cuniculus (Rabbit) protein is Cyclic nucleotide-gated channel alpha-2.